We begin with the raw amino-acid sequence, 265 residues long: Late expression factor 5 (265 aa).

This sequence belongs to the baculoviridae LEF-5 family. Interacts (via N-terminus) with itself.

Its subcellular location is the host nucleus. In terms of biological role, plays a role in the transcription of late viral genes. May function as an transcriptional initiation factor. In Lepidoptera (butterflies and moths), this protein is Late expression factor 5 (LEF-5).